The following is a 259-amino-acid chain: MLFTLKKVIGNMLLPLPLMLLIIGAGLALLWFSRFQKTGKIFISIGWLALLLLSLQPVADRLLRPIESTYPTWNNSQKVDYIVVLGGGYTWNPQWAPSSNLINNSLPRLNEGIRLWRENPGSKLIFTGGVAKTNTVSTAEVGARVAQSLGVPREQIITLDLPKDTEEEAAAVKQAIGDAPFLLVTSASHLPRAMIFFQQEGLNPLPAPANQLAIDSPLNPWERAIPSPVWLMHSDRVGYETLGRIWQWLKGSSGEPRQE.

The next 2 membrane-spanning stretches (helical) occupy residues 12–32 and 39–59; these read MLLP…LLWF and GKIF…QPVA.

It localises to the cell inner membrane. Functionally, plays a critical role in the metabolism of the essential lipid carrier used for cell wall synthesis. In Escherichia coli O157:H7, this protein is Envelope biogenesis factor ElyC (elyC).